Reading from the N-terminus, the 206-residue chain is MARYIGPKCKLSRREGTDLFLKSGARALDSKCKAENVPGQHGQRRGRLSDYGLQLREKQKVRRIYGVLERQFRGYYQEASRRKGSTGENLLQLLECRLDNVVYRMGFGSTRSESRQLVSHKAITVNGQTVNIPSYQVKAGDVVAVREKSKNQLRIAQALELCGQRGRVEWVEVDLDKKAGTFKSAPARSDLSADINENLIVELYSK.

One can recognise an S4 RNA-binding domain in the interval 96-156; the sequence is CRLDNVVYRM…EKSKNQLRIA (61 aa).

Belongs to the universal ribosomal protein uS4 family. As to quaternary structure, part of the 30S ribosomal subunit. Contacts protein S5. The interaction surface between S4 and S5 is involved in control of translational fidelity.

In terms of biological role, one of the primary rRNA binding proteins, it binds directly to 16S rRNA where it nucleates assembly of the body of the 30S subunit. Functionally, with S5 and S12 plays an important role in translational accuracy. The polypeptide is Small ribosomal subunit protein uS4 (Pseudomonas aeruginosa (strain LESB58)).